The chain runs to 347 residues: Haptoglobin (347 aa).

Positions 1–18 (MRALGAVVTLLLWGQLFA) are cleaved as a signal peptide. A Sushi domain is found at 31-88 (DSCPKPPEIANGYVEHLVRYRCRQFYRLRAEGDGVYTLNDEKQWVNTVAGEKLPECEA). 4 disulfides stabilise this stretch: C52–C86, C90–C207, C250–C281, and C292–C322. Residues 103-345 (IIGGSMDAKG…LKDWVQETMA (243 aa)) form the Peptidase S1 domain. N-linked (GlcNAc...) asparagine glycans are attached at residues N148, N182, N256, and N264. The tract at residues 259–264 (VPEKKN) is interaction with CD163.

It belongs to the peptidase S1 family. In terms of assembly, tetramer of two alpha and two beta chains; disulfide-linked. The hemoglobin/haptoglobin complex is composed of a haptoglobin dimer bound to two hemoglobin alpha-beta dimers. Interacts with CD163. Interacts with ERGIC3. In terms of tissue distribution, expressed by the liver and secreted in plasma.

The protein resides in the secreted. In terms of biological role, as a result of hemolysis, hemoglobin is found to accumulate in the kidney and is secreted in the urine. Haptoglobin captures, and combines with free plasma hemoglobin to allow hepatic recycling of heme iron and to prevent kidney damage. Haptoglobin also acts as an antioxidant, has antibacterial activity and plays a role in modulating many aspects of the acute phase response. Hemoglobin/haptoglobin complexes are rapidly cleared by the macrophage CD163 scavenger receptor expressed on the surface of liver Kupfer cells through an endocytic lysosomal degradation pathway. The sequence is that of Haptoglobin (Hp) from Mus musculus (Mouse).